The following is a 272-amino-acid chain: Protein SSO0103 (272 aa).

This sequence belongs to the CinA family.

The polypeptide is Protein SSO0103 (Saccharolobus solfataricus (strain ATCC 35092 / DSM 1617 / JCM 11322 / P2) (Sulfolobus solfataricus)).